The chain runs to 423 residues: ATP-dependent Clp protease ATP-binding subunit ClpX (423 aa).

The ClpX-type ZB domain maps to 1–50 (MTDDTEYRCSFCGKEHHQVDDLIAGPDVRICSECVVLSCEIVEDRRNEAL). Residues C9, C12, C31, and C34 each contribute to the Zn(2+) site. Residue 126–133 (PTGCGKTY) coordinates ATP.

Belongs to the ClpX chaperone family. As to quaternary structure, component of the ClpX-ClpP complex. Forms a hexameric ring that, in the presence of ATP, binds to fourteen ClpP subunits assembled into a disk-like structure with a central cavity, resembling the structure of eukaryotic proteasomes.

In terms of biological role, ATP-dependent specificity component of the Clp protease. It directs the protease to specific substrates. Can perform chaperone functions in the absence of ClpP. This is ATP-dependent Clp protease ATP-binding subunit ClpX from Tropheryma whipplei (strain Twist) (Whipple's bacillus).